The primary structure comprises 410 residues: Phthiocerol/phthiodiolone dimycocerosyl transferase (410 aa).

Residue histidine 118 is the Proton acceptor of the active site.

This sequence belongs to the acyltransferase PapA5 family. As to quaternary structure, monomer. Interacts directly with the acyl carrier protein (ACP) domain of the mycocerosic acid synthase (mas) protein.

It carries out the reaction 2 a mycocerosyl-[mycocerosic acid synthase] + a phthiocerol = a dimycocerosyl phthiocerol + 2 holo-[mycocerosic acid synthase].. The enzyme catalyses 2 a mycocerosyl-[mycocerosic acid synthase] + a phthiodiolone = a dimycocerosyl phthiodiolone + 2 holo-[mycocerosic acid synthase].. It catalyses the reaction 2 a mycocerosyl-[mycocerosic acid synthase] + a phenolphthiocerol = a dimycocerosyl phenolphthiocerol + 2 holo-[mycocerosic acid synthase].. Functionally, catalyzes diesterification of phthiocerol, phthiodiolone, and phenolphthiocerol with mycocerosic acids, the final step in the phthiocerol, phthiodiolone and phenolphthiocerol dimycocerosate esters (PDIM) synthesis. Can directly transfer the mycocerosate bound to the mycocerosic acid synthase (mas) onto the substrate alcohols. The protein is Phthiocerol/phthiodiolone dimycocerosyl transferase (papA5) of Mycobacterium sp. (strain JLS).